Here is a 91-residue protein sequence, read N- to C-terminus: uncharacterized protein (91 aa).

The next 3 helical transmembrane spans lie at 4–21 (YAII…LRRG), 28–50 (IIEV…SHAV), and 60–82 (VKAF…GTYL).

It localises to the cell membrane. This is an uncharacterized protein from Archaeoglobus fulgidus (strain ATCC 49558 / DSM 4304 / JCM 9628 / NBRC 100126 / VC-16).